A 1837-amino-acid polypeptide reads, in one-letter code: Nucleoporin nup211 (1837 aa).

Coiled-coil stretches lie at residues 59–378, 415–519, and 559–625; these read EVNY…YDEI, YKQK…ELDL, and VFRN…QLRY. T650 carries the phosphothreonine modification. 3 coiled-coil regions span residues 661–1163, 1222–1637, and 1675–1712; these read EQTS…NKLL, LDNR…ENTH, and KAKISVYEKKTRDLQNKITQLEETIENLNKQLSNPEKT. The segment at 1464 to 1521 is disordered; that stretch reads KDSNHQLQESASSDAEQITKEQFEQLKSEKERTEKELADSKNELEHLQSEAVDADGKT. Residues 1468–1479 are compositionally biased toward polar residues; sequence HQLQESASSDAE. Over residues 1480-1521 the composition is skewed to basic and acidic residues; the sequence is QITKEQFEQLKSEKERTEKELADSKNELEHLQSEAVDADGKT. The residue at position 1558 (S1558) is a Phosphoserine. The residue at position 1560 (T1560) is a Phosphothreonine. The residue at position 1563 (S1563) is a Phosphoserine. 2 disordered regions span residues 1602-1642 and 1700-1837; these read EKEK…NIDD and ENLN…KKAK. The segment covering 1617-1628 has biased composition (basic and acidic residues); it reads KSQRIKELEEQA. Composition is skewed to polar residues over residues 1700–1730, 1753–1763, 1795–1814, and 1827–1837; these read ENLNKQLSNPEKTDESTSSVTETKPVTSKPT, KSLSARLQGTG, IATSKNAAQNAKELSSTAKS, and GGSSSNQKKAK.

The protein localises to the cytoplasm. It localises to the nucleus. Functionally, functions as a component of the nuclear pore complex (NPC). NPC components, collectively referred to as nucleoporins (NUPs), can play the role of both NPC structural components and of docking or interaction partners for transiently associated nuclear transport factors. Active directional transport is assured by both, a Phe-Gly (FG) repeat affinity gradient for these transport factors across the NPC and a transport cofactor concentration gradient across the nuclear envelope. The polypeptide is Nucleoporin nup211 (nup211) (Schizosaccharomyces pombe (strain 972 / ATCC 24843) (Fission yeast)).